A 433-amino-acid chain; its full sequence is Glutamate-1-semialdehyde 2,1-aminomutase (433 aa).

N6-(pyridoxal phosphate)lysine is present on lysine 271.

The protein belongs to the class-III pyridoxal-phosphate-dependent aminotransferase family. HemL subfamily. As to quaternary structure, homodimer. Requires pyridoxal 5'-phosphate as cofactor.

The protein resides in the cytoplasm. The enzyme catalyses (S)-4-amino-5-oxopentanoate = 5-aminolevulinate. It participates in porphyrin-containing compound metabolism; protoporphyrin-IX biosynthesis; 5-aminolevulinate from L-glutamyl-tRNA(Glu): step 2/2. It functions in the pathway porphyrin-containing compound metabolism; chlorophyll biosynthesis. In Prochlorococcus marinus (strain MIT 9515), this protein is Glutamate-1-semialdehyde 2,1-aminomutase.